The sequence spans 314 residues: UDP-glucose 4-epimerase (314 aa).

Residues 11-12, 31-36, 56-57, and 77-81 each bind NAD(+); these read FI, DNFATG, DI, and LAAQI. Substrate-binding residues include serine 121 and tyrosine 146. Residues tyrosine 146 and lysine 150 each contribute to the NAD(+) site. Tyrosine 146 serves as the catalytic Proton acceptor. Substrate is bound by residues asparagine 175, 189–190, 204–206, arginine 213, and 271–274; these read VV, RVF, and RLGD.

The protein belongs to the NAD(P)-dependent epimerase/dehydratase family. Homodimer. Requires NAD(+) as cofactor.

It carries out the reaction UDP-alpha-D-glucose = UDP-alpha-D-galactose. It participates in carbohydrate metabolism; galactose metabolism. Functionally, involved in the metabolism of galactose. Catalyzes the conversion of UDP-galactose (UDP-Gal) to UDP-glucose (UDP-Glc) through a mechanism involving the transient reduction of NAD. The sequence is that of UDP-glucose 4-epimerase (galE1) from Mycobacterium tuberculosis (strain CDC 1551 / Oshkosh).